We begin with the raw amino-acid sequence, 122 residues long: Large ribosomal subunit protein uL14 (122 aa).

It belongs to the universal ribosomal protein uL14 family. As to quaternary structure, part of the 50S ribosomal subunit. Forms a cluster with proteins L3 and L19. In the 70S ribosome, L14 and L19 interact and together make contacts with the 16S rRNA in bridges B5 and B8.

Binds to 23S rRNA. Forms part of two intersubunit bridges in the 70S ribosome. This is Large ribosomal subunit protein uL14 from Desulforapulum autotrophicum (strain ATCC 43914 / DSM 3382 / VKM B-1955 / HRM2) (Desulfobacterium autotrophicum).